A 90-amino-acid polypeptide reads, in one-letter code: ATP synthase subunit c (90 aa).

2 helical membrane passes run 17–37 (PLAY…AGVV) and 70–90 (LAIV…IIFV).

The protein belongs to the ATPase C chain family. In terms of assembly, F-type ATPases have 2 components, F(1) - the catalytic core - and F(0) - the membrane proton channel. F(1) has five subunits: alpha(3), beta(3), gamma(1), delta(1), epsilon(1). F(0) has three main subunits: a(1), b(2) and c(10-14). The alpha and beta chains form an alternating ring which encloses part of the gamma chain. F(1) is attached to F(0) by a central stalk formed by the gamma and epsilon chains, while a peripheral stalk is formed by the delta and b chains.

The protein localises to the cell membrane. Its function is as follows. F(1)F(0) ATP synthase produces ATP from ADP in the presence of a proton or sodium gradient. F-type ATPases consist of two structural domains, F(1) containing the extramembraneous catalytic core and F(0) containing the membrane proton channel, linked together by a central stalk and a peripheral stalk. During catalysis, ATP synthesis in the catalytic domain of F(1) is coupled via a rotary mechanism of the central stalk subunits to proton translocation. Functionally, key component of the F(0) channel; it plays a direct role in translocation across the membrane. A homomeric c-ring of between 10-14 subunits forms the central stalk rotor element with the F(1) delta and epsilon subunits. This is ATP synthase subunit c from Metamycoplasma arthritidis (strain 158L3-1) (Mycoplasma arthritidis).